Reading from the N-terminus, the 291-residue chain is Protease HtpX homolog (291 aa).

The next 2 helical transmembrane spans lie at 4 to 24 and 38 to 58; these read VFLFLITNLAVILVLSFSARL and LGMLLAFAALIGFGGSFISLL. His-144 serves as a coordination point for Zn(2+). Glu-145 is a catalytic residue. Zn(2+) is bound at residue His-148. The next 2 helical transmembrane spans lie at 159 to 179 and 199 to 219; these read LIQGVVNTFVIFLARVFAYAL and ISSIAFEIVFGILASIVVMYF. Glu-224 provides a ligand contact to Zn(2+).

This sequence belongs to the peptidase M48B family. Requires Zn(2+) as cofactor.

Its subcellular location is the cell inner membrane. In Chlorobium luteolum (strain DSM 273 / BCRC 81028 / 2530) (Pelodictyon luteolum), this protein is Protease HtpX homolog.